The following is a 108-amino-acid chain: UPF0060 membrane protein YnfA (108 aa).

The Periplasmic segment spans residues 1-5 (MFKTT). The chain crosses the membrane as a helical span at residues 6–26 (LLFFITALCEIIGCFLPWLWL). At 27 to 30 (KRNG) the chain is on the cytoplasmic side. Residues 31–51 (SIWLLLPAGVSLAFFVWLLTL) form a helical membrane-spanning segment. The Periplasmic portion of the chain corresponds to 52–60 (HPAASGRVY). The chain crosses the membrane as a helical span at residues 61-81 (AAYGGVYVCTALLWLRFIDGV). The Cytoplasmic portion of the chain corresponds to 82 to 84 (KLS). Residues 85-105 (LYDWSGALIALCGMLIIVAGW) traverse the membrane as a helical segment. Topologically, residues 106–108 (GRA) are periplasmic.

It belongs to the UPF0060 family.

The protein localises to the cell inner membrane. This Escherichia fergusonii (strain ATCC 35469 / DSM 13698 / CCUG 18766 / IAM 14443 / JCM 21226 / LMG 7866 / NBRC 102419 / NCTC 12128 / CDC 0568-73) protein is UPF0060 membrane protein YnfA.